Here is a 228-residue protein sequence, read N- to C-terminus: ATP-dependent dethiobiotin synthetase BioD (228 aa).

13–18 lines the ATP pocket; the sequence is DIGKTF. T17 provides a ligand contact to Mg(2+). The active site involves K38. S42 is a binding site for substrate. ATP is bound by residues D55, 116–119, 179–180, and 208–210; these read EGSG, NK, and PKI. Positions 55 and 116 each coordinate Mg(2+).

The protein belongs to the dethiobiotin synthetase family. In terms of assembly, homodimer. The cofactor is Mg(2+).

It localises to the cytoplasm. It carries out the reaction (7R,8S)-7,8-diammoniononanoate + CO2 + ATP = (4R,5S)-dethiobiotin + ADP + phosphate + 3 H(+). The protein operates within cofactor biosynthesis; biotin biosynthesis; biotin from 7,8-diaminononanoate: step 1/2. Its function is as follows. Catalyzes a mechanistically unusual reaction, the ATP-dependent insertion of CO2 between the N7 and N8 nitrogen atoms of 7,8-diaminopelargonic acid (DAPA, also called 7,8-diammoniononanoate) to form a ureido ring. This Clostridium perfringens (strain ATCC 13124 / DSM 756 / JCM 1290 / NCIMB 6125 / NCTC 8237 / Type A) protein is ATP-dependent dethiobiotin synthetase BioD.